The following is a 361-amino-acid chain: Hydroxyproline O-arabinosyltransferase PLENTY (361 aa).

Residues 13–33 form a helical; Signal-anchor membrane-spanning segment; the sequence is LLMLLMVLGFFFATYNLVSMI.

Its subcellular location is the golgi apparatus membrane. The enzyme catalyses trans-4-hydroxy-L-prolyl-[protein] + UDP-beta-L-arabinofuranose = O-(beta-L-arabinofuranosyl)-trans-4-hydroxy-L-prolyl-[protein] + UDP + H(+). Glycosyltransferase involved in the O-arabinosylation of several proteins including extensins and small signaling peptides. Catalyzes the transfer of the initial L-arabinose to the hydroxyl group of Hyp residues. Probably involved in the arabinosylation of CLAVATA3/ESR-related (CLE) signaling peptides that move from root to shoot, to interact with receptor kinase signaling that regulates nodulation. Involved in long distance nodulation signaling events. Involved in the autoregulation of nodulation (AON), a long distance systemic signaling from root to shoot and back again, which allows legumes to limit the number of root nodules formed based on available nitrogen and previous rhizobial colonization. The protein is Hydroxyproline O-arabinosyltransferase PLENTY of Lotus japonicus (Lotus corniculatus var. japonicus).